The chain runs to 404 residues: Clavilactone A biosynthesis cluster protein Y (404 aa).

In terms of biological role, part of the gene cluster that mediates the biosynthesis of clavilactone A, a meroterpenoid that features a unique benzo-fused ten-membered carbocyclic ring unit with an alpha,beta-epoxy-gamma-lactone moiety, forming an intriguing 10/5/3 tricyclic nested skeleton. ClaR, ClaS and ClaT are sufficient to produce clavilactone A and the function of claY, if any, has still to be identified. The biosynthesis begins with the prenyltransferase claS that transfers geranyl pyrophosphate (GPP) to hydroquinone to produces geranylhydroquinon. The cytochrome P450 monooxygenase claR then catalyzes the diradical coupling reaction between the intramolecular hydroquinone and allyl moieties to form the benzo-fused ten-membered carbocyclic ring unit of wigantol. Finally the cytochrome P450 monooxygenase claT exquisitely and stereoselectively assembles the alpha,beta-epoxy-gamma-lactone moiety, producing clavilactone A via arnebinol A. The polypeptide is Clavilactone A biosynthesis cluster protein Y (Ampulloclitocybe clavipes (Club foot)).